A 22-amino-acid chain; its full sequence is thr operon leader peptide (22 aa).

Belongs to the thr operon leader peptide family.

In terms of biological role, this protein is involved in control of the biosynthesis of threonine. This chain is thr operon leader peptide, found in Yersinia pestis bv. Antiqua (strain Antiqua).